A 122-amino-acid polypeptide reads, in one-letter code: Large ribosomal subunit protein bL19 (122 aa).

The protein belongs to the bacterial ribosomal protein bL19 family.

Its function is as follows. This protein is located at the 30S-50S ribosomal subunit interface and may play a role in the structure and function of the aminoacyl-tRNA binding site. This is Large ribosomal subunit protein bL19 from Chlamydia abortus (strain DSM 27085 / S26/3) (Chlamydophila abortus).